Here is a 1160-residue protein sequence, read N- to C-terminus: Major DNA-binding protein (1160 aa).

The Required for filament formation signature appears at 808 to 809 (FW). Residues 1139–1160 (ARGGEHAFDEDCGLLPAKRGRL) form a required for nuclear localization region.

This sequence belongs to the herpesviridae major DNA-binding protein family. Homooligomers. Forms double-helical filaments necessary for the formation of replication compartments within the host nucleus. Interacts with the origin-binding protein. Interacts with the helicase primase complex; this interaction stimulates primer synthesis activity of the helicase-primase complex. Interacts with the DNA polymerase. Interacts with the alkaline exonuclease; this interaction increases its nuclease processivity.

It is found in the host nucleus. Functionally, single-stranded DNA-binding protein required for DNA replication. Plays several crucial roles in viral infection. Participates in the opening of the viral DNA origin to initiate replication by interacting with the origin-binding protein. May disrupt loops, hairpins and other secondary structures present on ssDNA to reduce and eliminate pausing of viral DNA polymerase at specific sites during elongation. Promotes viral DNA recombination by performing strand-transfer, characterized by the ability to transfer a DNA strand from a linear duplex to a complementary single-stranded DNA circle. Can also catalyze the renaturation of complementary single strands. Additionally, reorganizes the host cell nucleus, leading to the formation of prereplicative sites and replication compartments. This process is driven by the protein which can form double-helical filaments in the absence of DNA. The sequence is that of Major DNA-binding protein from Simian cytomegalovirus (strain Colburn).